Reading from the N-terminus, the 196-residue chain is PRADC1-like protein (196 aa).

The first 18 residues, 1–18, serve as a signal peptide directing secretion; the sequence is MLIAWLVLAATLSRSIRA. In terms of domain architecture, PA spans 73 to 171; sequence ITDPPGACQE…STLQRLKRVH (99 aa). An N-linked (GlcNAc...) asparagine glycan is attached at Asn179.

The protein localises to the secreted. Functionally, may be involved in iversification of muscle cell fates. This chain is PRADC1-like protein, found in Drosophila melanogaster (Fruit fly).